The chain runs to 498 residues: ATP synthase subunit beta, chloroplastic (498 aa).

Residue 172–179 (GGAGVGKT) participates in ATP binding.

It belongs to the ATPase alpha/beta chains family. In terms of assembly, F-type ATPases have 2 components, CF(1) - the catalytic core - and CF(0) - the membrane proton channel. CF(1) has five subunits: alpha(3), beta(3), gamma(1), delta(1), epsilon(1). CF(0) has four main subunits: a(1), b(1), b'(1) and c(9-12).

It is found in the plastid. It localises to the chloroplast thylakoid membrane. It carries out the reaction ATP + H2O + 4 H(+)(in) = ADP + phosphate + 5 H(+)(out). In terms of biological role, produces ATP from ADP in the presence of a proton gradient across the membrane. The catalytic sites are hosted primarily by the beta subunits. The chain is ATP synthase subunit beta, chloroplastic from Liriodendron tulipifera (Tuliptree).